Here is an 85-residue protein sequence, read N- to C-terminus: uncharacterized protein (85 aa).

Positions 35-85 (SDKDAPFSTQALTRSKSKRKRSALPVANGLKKPTRSIKRPSRGERLSATTI) are disordered.

This is an uncharacterized protein from Pasteurella multocida (strain Pm70).